The primary structure comprises 169 residues: Cell division inhibitor SulA (169 aa).

Over residues 1–13 (MFTSAHANRSAQA) the composition is skewed to polar residues. The disordered stretch occupies residues 1-26 (MFTSAHANRSAQASAPAGHYAHRSGE). A ftsZ binding region spans residues 106–112 (ALRTGNY). The tract at residues 162–169 (KIHSNLYH) is lon protease binding.

This sequence belongs to the SulA family. As to quaternary structure, interacts with FtsZ. Is rapidly cleaved and degraded by the Lon protease once DNA damage is repaired.

Its function is as follows. Component of the SOS system and an inhibitor of cell division. Accumulation of SulA causes rapid cessation of cell division and the appearance of long, non-septate filaments. In the presence of GTP, binds a polymerization-competent form of FtsZ in a 1:1 ratio, thus inhibiting FtsZ polymerization and therefore preventing it from participating in the assembly of the Z ring. This mechanism prevents the premature segregation of damaged DNA to daughter cells during cell division. In Klebsiella pneumoniae subsp. pneumoniae (strain ATCC 700721 / MGH 78578), this protein is Cell division inhibitor SulA.